The following is a 112-amino-acid chain: Carboxysome shell protein CcmK4 (112 aa).

Residues 6–92 (AVGSIETIGF…PHENVVAVLP (87 aa)) form the BMC domain.

It belongs to the bacterial microcompartments protein family. CcmK subfamily. Homohexamer. Interacts with full-length CcmM. Forms mixed heterohexamers with CcmK3, probably with 1:5 CcmK3:CcmK4 stoichiometry. Only very weak interactions with CcmK1 and CcmK2 were seen.

The protein localises to the carboxysome. Its function is as follows. A probably minor shell protein component of the carboxysome, a polyhedral inclusion where RuBisCO (ribulose bisphosphate carboxylase, rbcL-rbcS) is sequestered. The central pore probably regulates metabolite flux, as might the gaps between assembled homohexamers. Homohexamers make sheets that probably form the facets of the polyhedral carboxysome. This subunit probably makes both homohexamers and heterohexamers with CcmK3. This Synechocystis sp. (strain ATCC 27184 / PCC 6803 / Kazusa) protein is Carboxysome shell protein CcmK4.